The sequence spans 142 residues: Transcriptional regulator MraZ (142 aa).

SpoVT-AbrB domains are found at residues 5–51 and 77–120; these read ASSL…PRPV and ASDV…DATK.

It belongs to the MraZ family. In terms of assembly, forms oligomers.

The protein localises to the cytoplasm. The protein resides in the nucleoid. The chain is Transcriptional regulator MraZ from Janthinobacterium sp. (strain Marseille) (Minibacterium massiliensis).